The chain runs to 847 residues: B-cell receptor CD22 (847 aa).

Residues M1–S19 form the signal peptide. The region spanning D20–E138 is the Ig-like V-type domain. At D20–R687 the chain is on the extracellular side. 3 N-linked (GlcNAc...) asparagine glycosylation sites follow: N67, N101, and N112. R120 is an N-acetylneuraminate binding site. 3 N-linked (GlcNAc...) asparagine glycosylation sites follow: N135, N164, and N231. Ig-like C2-type domains follow at residues P143–Q235, P242–Q326, P331–Q416, P419–N500, P505–S582, and P593–T676. C161 and C219 are joined by a disulfide. 2 cysteine pairs are disulfide-bonded: C265-C309 and C353-C396. N-linked (GlcNAc...) asparagine glycans are attached at residues N363, N428, N445, N448, and N479. 2 disulfide bridges follow: C442–C484 and C529–C571. N-linked (GlcNAc...) asparagine glycans are attached at residues N574 and N634. A disulfide bond links C616 and C659. A helical transmembrane segment spans residues V688 to L708. Over Q709–H847 the chain is Cytoplasmic. Phosphoserine occurs at positions 725, 726, and 729. 2 consecutive short sequence motifs (ITIM motif) follow at residues I760 to L765 and V794 to L799. Y762 carries the post-translational modification Phosphotyrosine. Phosphotyrosine is present on residues Y807, Y822, and Y842. 2 short sequence motifs (ITIM motif) span residues I820–L825 and V840–L845.

It belongs to the immunoglobulin superfamily. SIGLEC (sialic acid binding Ig-like lectin) family. In terms of assembly, predominantly monomer of isoform CD22-beta. Also found as heterodimer of isoform CD22-beta and a shorter isoform. Interacts with PTPN6/SHP-1, LYN, SYK, PIK3R1/PIK3R2 and PLCG1 upon phosphorylation. Interacts with GRB2, INPP5D and SHC1 upon phosphorylation. May form a complex with INPP5D/SHIP, GRB2 and SHC1. In terms of processing, phosphorylation of Tyr-762, Tyr-807 and Tyr-822 are involved in binding to SYK, GRB2 and SYK, respectively. Phosphorylation of Tyr-842 is involved in binding to SYK, PLCG2 and PIK3R1/PIK3R2. Post-translationally, phosphorylated on tyrosine residues by LYN.

It localises to the cell membrane. Functionally, most highly expressed siglec (sialic acid-binding immunoglobulin-like lectin) on B-cells that plays a role in various aspects of B-cell biology including differentiation, antigen presentation, and trafficking to bone marrow. Binds to alpha 2,6-linked sialic acid residues of surface molecules such as CD22 itself, CD45 and IgM in a cis configuration. Can also bind to ligands on other cells as an adhesion molecule in a trans configuration. Acts as an inhibitory coreceptor on the surface of B-cells and inhibits B-cell receptor induced signaling, characterized by inhibition of the calcium mobilization and cellular activation. Mechanistically, the immunoreceptor tyrosine-based inhibitory motif domain is phosphorylated by the Src kinase LYN, which in turn leads to the recruitment of the protein tyrosine phosphatase 1/PTPN6, leading to the negative regulation of BCR signaling. If this negative signaling from is of sufficient strength, apoptosis of the B-cell can be induced. The protein is B-cell receptor CD22 of Pan paniscus (Pygmy chimpanzee).